Here is a 375-residue protein sequence, read N- to C-terminus: Protein RecA (375 aa).

ATP is bound at residue 88-95 (GPESSGKT).

This sequence belongs to the RecA family.

The protein localises to the cytoplasm. Its function is as follows. Can catalyze the hydrolysis of ATP in the presence of single-stranded DNA, the ATP-dependent uptake of single-stranded DNA by duplex DNA, and the ATP-dependent hybridization of homologous single-stranded DNAs. It interacts with LexA causing its activation and leading to its autocatalytic cleavage. The protein is Protein RecA of Rhodopirellula baltica (strain DSM 10527 / NCIMB 13988 / SH1).